The sequence spans 212 residues: ATP phosphoribosyltransferase (212 aa).

This sequence belongs to the ATP phosphoribosyltransferase family. Short subfamily. Heteromultimer composed of HisG and HisZ subunits.

It is found in the cytoplasm. The catalysed reaction is 1-(5-phospho-beta-D-ribosyl)-ATP + diphosphate = 5-phospho-alpha-D-ribose 1-diphosphate + ATP. It participates in amino-acid biosynthesis; L-histidine biosynthesis; L-histidine from 5-phospho-alpha-D-ribose 1-diphosphate: step 1/9. Its function is as follows. Catalyzes the condensation of ATP and 5-phosphoribose 1-diphosphate to form N'-(5'-phosphoribosyl)-ATP (PR-ATP). Has a crucial role in the pathway because the rate of histidine biosynthesis seems to be controlled primarily by regulation of HisG enzymatic activity. In Prochlorococcus marinus (strain MIT 9301), this protein is ATP phosphoribosyltransferase.